Reading from the N-terminus, the 142-residue chain is ATP synthase F(0) complex subunit C3, mitochondrial (142 aa).

The transit peptide at 1 to 67 (MFACAKLACT…REFQTSAISR (67 aa)) directs the protein to the mitochondrion. A helical transmembrane segment spans residues 83 to 103 (VGVAGSGAGIGTVFGSLIIGY). K110 is subject to N6,N6,N6-trimethyllysine. A helical transmembrane segment spans residues 118-138 (ILGFALSEAMGLFCLMVAFLI).

This sequence belongs to the ATPase C chain family. In terms of assembly, F-type ATPases have 2 components, CF(1) - the catalytic core - and CF(0) - the membrane proton channel. CF(1) has five subunits: alpha(3), beta(3), gamma(1), delta(1), epsilon(1). CF(0) has three main subunits: a, b and c. Interacts with TMEM70 and TMEM242. Trimethylated by ATPSCKMT at Lys-110. Methylation is required for proper incorporation of the C subunit into the ATP synthase complex and mitochondrial respiration.

The protein localises to the mitochondrion membrane. Functionally, mitochondrial membrane ATP synthase (F(1)F(0) ATP synthase or Complex V) produces ATP from ADP in the presence of a proton gradient across the membrane which is generated by electron transport complexes of the respiratory chain. F-type ATPases consist of two structural domains, F(1) - containing the extramembraneous catalytic core and F(0) - containing the membrane proton channel, linked together by a central stalk and a peripheral stalk. During catalysis, ATP synthesis in the catalytic domain of F(1) is coupled via a rotary mechanism of the central stalk subunits to proton translocation. Part of the complex F(0) domain. A homomeric c-ring of probably 10 subunits is part of the complex rotary element. The chain is ATP synthase F(0) complex subunit C3, mitochondrial from Homo sapiens (Human).